The sequence spans 211 residues: Thymidylate kinase (211 aa).

G7–T14 serves as a coordination point for ATP.

The protein belongs to the thymidylate kinase family.

It catalyses the reaction dTMP + ATP = dTDP + ADP. Phosphorylation of dTMP to form dTDP in both de novo and salvage pathways of dTTP synthesis. This chain is Thymidylate kinase, found in Anaplasma marginale (strain St. Maries).